We begin with the raw amino-acid sequence, 454 residues long: Serine/arginine (SR)-type shuttling mRNA binding protein HRB1 (454 aa).

Residues 1–141 (MSDQERGSEN…SSGARGDYGP (141 aa)) form a disordered region. Positions 14–24 (SRSRSRSPVRR) are enriched in basic residues. Basic and acidic residues-rich tracts occupy residues 25 to 38 (RMSDDHGYERDNHL) and 50 to 113 (KFAD…DYPR). Arg127 carries the post-translational modification Omega-N-methylarginine. 2 RRM domains span residues 161–237 (NSIF…QDNP) and 261–338 (HEVI…SKES). Residues Ser338, Ser343, and Ser355 each carry the phosphoserine modification. One can recognise an RRM 3 domain in the interval 376–453 (RLIYCSNLPF…CDLDISYAKR (78 aa)).

In terms of processing, methylated by HMT1.

It localises to the cytoplasm. The protein localises to the nucleus. The protein resides in the P-body. Its subcellular location is the stress granule. In terms of biological role, binds to intron-containing transcripts and is involved in quality control for the export of spliced mRNAs from the nucleus. Binds to pre-mRNAs until splicing is completed or until faulty mRNAs are degraded. On correctly spliced mRNAs, GBP2 and HRB1 recruit MEX67 to allow nuclear export. On faulty mRNAs, GBP2 and HRB1 associate with the TRAMP complex that guides those pre-mRNAs to the exosome for degradation. The sequence is that of Serine/arginine (SR)-type shuttling mRNA binding protein HRB1 from Saccharomyces cerevisiae (strain ATCC 204508 / S288c) (Baker's yeast).